The following is a 62-amino-acid chain: Photosystem II reaction center protein Z (62 aa).

The next 2 membrane-spanning stretches (helical) occupy residues Ala-8–Ala-28 and Phe-41–Ile-61.

This sequence belongs to the PsbZ family. In terms of assembly, PSII is composed of 1 copy each of membrane proteins PsbA, PsbB, PsbC, PsbD, PsbE, PsbF, PsbH, PsbI, PsbJ, PsbK, PsbL, PsbM, PsbT, PsbY, PsbZ, Psb30/Ycf12, at least 3 peripheral proteins of the oxygen-evolving complex and a large number of cofactors. It forms dimeric complexes.

The protein localises to the plastid. The protein resides in the chloroplast thylakoid membrane. In terms of biological role, may control the interaction of photosystem II (PSII) cores with the light-harvesting antenna, regulates electron flow through the 2 photosystem reaction centers. PSII is a light-driven water plastoquinone oxidoreductase, using light energy to abstract electrons from H(2)O, generating a proton gradient subsequently used for ATP formation. The protein is Photosystem II reaction center protein Z of Jasminum nudiflorum (Winter jasmine).